The following is a 476-amino-acid chain: Sulfite exporter TauE/SafE family protein 3 (476 aa).

12 helical membrane passes run 8–28, 76–92, 99–115, 120–142, 151–171, 172–192, 257–277, 291–311, 339–359, 360–380, 397–417, and 433–453; these read WLGL…FAFV, FNWQ…FGAA, VGGG…IIGF, ATAI…NLRL, IIDY…ISIG, VAFN…VLFL, VYWK…ALQI, VINL…AVAL, FGII…FIMG, PLFL…TFAM, FPVP…WVGQ, and IIFI…GVGI.

The protein belongs to the 4-toluene sulfonate uptake permease (TSUP) (TC 2.A.102) family.

Its subcellular location is the membrane. The sequence is that of Sulfite exporter TauE/SafE family protein 3 from Arabidopsis thaliana (Mouse-ear cress).